The chain runs to 166 residues: Large ribosomal subunit protein uL10 (166 aa).

Belongs to the universal ribosomal protein uL10 family. In terms of assembly, part of the ribosomal stalk of the 50S ribosomal subunit. The N-terminus interacts with L11 and the large rRNA to form the base of the stalk. The C-terminus forms an elongated spine to which L12 dimers bind in a sequential fashion forming a multimeric L10(L12)X complex.

Forms part of the ribosomal stalk, playing a central role in the interaction of the ribosome with GTP-bound translation factors. This chain is Large ribosomal subunit protein uL10, found in Bacillus mycoides (strain KBAB4) (Bacillus weihenstephanensis).